We begin with the raw amino-acid sequence, 275 residues long: Tryptophan synthase alpha chain (275 aa).

Catalysis depends on proton acceptor residues Glu-51 and Asp-62.

This sequence belongs to the TrpA family. As to quaternary structure, tetramer of two alpha and two beta chains.

The enzyme catalyses (1S,2R)-1-C-(indol-3-yl)glycerol 3-phosphate + L-serine = D-glyceraldehyde 3-phosphate + L-tryptophan + H2O. It participates in amino-acid biosynthesis; L-tryptophan biosynthesis; L-tryptophan from chorismate: step 5/5. Its function is as follows. The alpha subunit is responsible for the aldol cleavage of indoleglycerol phosphate to indole and glyceraldehyde 3-phosphate. This chain is Tryptophan synthase alpha chain, found in Methanopyrus kandleri (strain AV19 / DSM 6324 / JCM 9639 / NBRC 100938).